Here is a 1295-residue protein sequence, read N- to C-terminus: MNEVNDFDAIRISLASPDQIRSWSYGEVTKPETINYRTLKPERDGLFCERIFGPIKDFECACGKYKRIRYKGIICDKCGVEIARAKVRRERMGHIELACPVGHIWFTRGIPSRVGLLLNLSTRSLERIIYYSHFIITAVNDEARAKAIKDLEVISSQRVADKGSEVDTRVAQMEAEDATVEAINQIRRDFSTEREQMEEDIQLLIDQLKDLQKGNLLTENQYYELKQRFSNVFEASMGAEALLKLLSYIDMDKERSKLIQETRSTSGQRRKKAGKQLQLVEAFRRSSNKPEWMIMTVLPVLPPDLRPMVQLDGGRFATSDLNDLYRRVINRNNRLQHLMEIGAPEIIIRNEKRMLQEAVDSLIDNGRRGKSVAVNGDHKAKSLSDLLRGKQGRFRQNLLGKRVDYSGRSVIVVGPSLKLSQCGLPRRMALELFKPFVMHRLVRDGLAPNIKSARRLVERARPEVYDILEEVVKDRPVLLNRAPTLHRLSIQAFEPVLIDGSALRLHPLVCSAFNADFDGDQMAVHVPLSKAAVKEARETMLSIHNMMLPSSGEPVVSPSLDMVFGCYYLTTTRPGAKGEGKIFGDFEEAKRYYEMGIIDLRAIIKVRDGKGNMLETTTGRIIFNDVLPKAVEFQNMDIPKSAIKKIIGRCYKILSSQDMAVMLDKIKELGFKFATSSGISIAMSDISVPREKTKLVAAADERTAIAEGQFARGLITEDERYNSIIETWMETTDRITDAIQAGFDKQGSVYMMANSGAKGNISQIRQMAGLRGLMTNPSGRIIDFPIKSSLREGLTALEYFISTHGARKGLADTALRTSGSGYLTRRLIDVTQDVIILQEDCGTANGTWIIEPKEKGMLPPLVDRILGRWTAHNVVHPQTGEIIVDNNEEIDEIKAKAIGEAGITEVFVRSPLTCESTHGMCRRCYGRDLGRVRLVDMNTAVGIIAAQSIGEPGTQLTLRTFHTGGVVGVDITTGLPRVEELFEARPPKVQSIISEIDGVVEVIENENGRHIRIASDEVYQDEYELPSGWKTQVQSRQWVDSGMVLASPELEGKSKAVVQSDQNVVARVAGEVTIEGNLITIKYSESEEREYTIPAAMQIKVKTGDTIRAGQQLTDGSINPQDILSILGRDAVQKYLVEEVQKVYYSQGVHINDKHIEVIARQMLIKVRIDSSGDTDLVPGELVDKFRYEDINAKVLAEGGEPATAHTVLMGITRASLSTESWLAAASFQETTRVLTDAAIYGRVDKLSGLKENVIIGKLIPAQCKSCKEATIERAERIAAAASAPAMSGLPENCL.

4 residues coordinate Zn(2+): C60, C62, C75, and C78. 3 residues coordinate Mg(2+): D516, D518, and D520. C841, C914, C921, and C924 together coordinate Zn(2+).

This sequence belongs to the RNA polymerase beta' chain family. In terms of assembly, the RNAP catalytic core consists of 2 alpha, 1 beta, 1 beta' and 1 omega subunit. When a sigma factor is associated with the core the holoenzyme is formed, which can initiate transcription. It depends on Mg(2+) as a cofactor. Zn(2+) is required as a cofactor.

The catalysed reaction is RNA(n) + a ribonucleoside 5'-triphosphate = RNA(n+1) + diphosphate. Its function is as follows. DNA-dependent RNA polymerase catalyzes the transcription of DNA into RNA using the four ribonucleoside triphosphates as substrates. The sequence is that of DNA-directed RNA polymerase subunit beta' from Dehalococcoides mccartyi (strain ATCC BAA-2100 / JCM 16839 / KCTC 5957 / BAV1).